Consider the following 212-residue polypeptide: 3-isopropylmalate dehydratase small subunit (212 aa).

The protein belongs to the LeuD family. LeuD type 1 subfamily. As to quaternary structure, heterodimer of LeuC and LeuD.

The catalysed reaction is (2R,3S)-3-isopropylmalate = (2S)-2-isopropylmalate. It functions in the pathway amino-acid biosynthesis; L-leucine biosynthesis; L-leucine from 3-methyl-2-oxobutanoate: step 2/4. Catalyzes the isomerization between 2-isopropylmalate and 3-isopropylmalate, via the formation of 2-isopropylmaleate. The sequence is that of 3-isopropylmalate dehydratase small subunit from Thiobacillus denitrificans (strain ATCC 25259 / T1).